We begin with the raw amino-acid sequence, 357 residues long: Histidine biosynthesis bifunctional protein HisB (357 aa).

Residues 1-168 (MTPILFIDRD…GIAHALADAP (168 aa)) form a histidinol-phosphatase region. The Nucleophile role is filled by Asp8. The Mg(2+) site is built by Asp8, Asp10, and Asp128. Asp10 (proton donor) is an active-site residue. The tract at residues 169-357 (RTAVVQRDTK…TALPSTKGAL (189 aa)) is imidazoleglycerol-phosphate dehydratase.

In the N-terminal section; belongs to the histidinol-phosphatase family. This sequence in the C-terminal section; belongs to the imidazoleglycerol-phosphate dehydratase family. The cofactor is Mg(2+).

It localises to the cytoplasm. The enzyme catalyses D-erythro-1-(imidazol-4-yl)glycerol 3-phosphate = 3-(imidazol-4-yl)-2-oxopropyl phosphate + H2O. It carries out the reaction L-histidinol phosphate + H2O = L-histidinol + phosphate. It functions in the pathway amino-acid biosynthesis; L-histidine biosynthesis; L-histidine from 5-phospho-alpha-D-ribose 1-diphosphate: step 6/9. The protein operates within amino-acid biosynthesis; L-histidine biosynthesis; L-histidine from 5-phospho-alpha-D-ribose 1-diphosphate: step 8/9. The protein is Histidine biosynthesis bifunctional protein HisB of Stenotrophomonas maltophilia (strain K279a).